Reading from the N-terminus, the 26-residue chain is NRLCCSQYGFCGTTSEYCSRVSGCQS.

The region spanning 1-26 (NRLCCSQYGFCGTTSEYCSRVSGCQS) is the Chitin-binding type-1 domain. An intrachain disulfide couples C4 to C18.

Seeds (at protein level).

Chitin-binding protein which functions in defense against chitin-containing fungal pathogens. This chain is Morintide mO4, found in Moringa oleifera (Horseradish tree).